Reading from the N-terminus, the 107-residue chain is MGGKTVTRADLAEAVYRKVGLSRTESAALVEMILDEVCDAIVNGETVKLSSFATFQVRDKNERIGRNPKTGEEVPILPRRVMTFKASNVLKQRILQEHQKRETKSQK.

This sequence belongs to the bacterial histone-like protein family. In terms of assembly, heterodimer of an alpha and a beta chain.

Functionally, this protein is one of the two subunits of integration host factor, a specific DNA-binding protein that functions in genetic recombination as well as in transcriptional and translational control. This Brucella anthropi (strain ATCC 49188 / DSM 6882 / CCUG 24695 / JCM 21032 / LMG 3331 / NBRC 15819 / NCTC 12168 / Alc 37) (Ochrobactrum anthropi) protein is Integration host factor subunit alpha.